We begin with the raw amino-acid sequence, 446 residues long: Probable glycine dehydrogenase (decarboxylating) subunit 1 (446 aa).

The protein belongs to the GcvP family. N-terminal subunit subfamily. As to quaternary structure, the glycine cleavage system is composed of four proteins: P, T, L and H. In this organism, the P 'protein' is a heterodimer of two subunits.

The enzyme catalyses N(6)-[(R)-lipoyl]-L-lysyl-[glycine-cleavage complex H protein] + glycine + H(+) = N(6)-[(R)-S(8)-aminomethyldihydrolipoyl]-L-lysyl-[glycine-cleavage complex H protein] + CO2. In terms of biological role, the glycine cleavage system catalyzes the degradation of glycine. The P protein binds the alpha-amino group of glycine through its pyridoxal phosphate cofactor; CO(2) is released and the remaining methylamine moiety is then transferred to the lipoamide cofactor of the H protein. This is Probable glycine dehydrogenase (decarboxylating) subunit 1 from Desulforamulus reducens (strain ATCC BAA-1160 / DSM 100696 / MI-1) (Desulfotomaculum reducens).